A 400-amino-acid polypeptide reads, in one-letter code: MEDGVYEPPDLTPEERMELENIRRRKQELLVEIQRLREELSEAMSEVEGLEANEGSKTLQRNRKMAMGRKKFNMDPKKGIQFLVENELLQNTPEEIARFLYKGEGLNKTAIGDYLGEREELNLAVLHAFVDLHEFTDLNLVQALRQFLWSFRLPGEAQKIDRMMEAFAQRYCLCNPGVFQSTDTCYVLSFAVIMLNTSLHNPNVRDKPGLERFVAMNRGINEGGDLPEELLRNLYDSIRNEPFKIPEDDGNDLTHTFFNPDREGWLLKLGGGRVKTWKRRWFILTDNCLYYFEYTTDKEPRGIIPLENLSIREVDDPRKPNCFELYIPNNKGQLIKACKTEADGRVVEGNHMVYRISAPTQEEKDEWIKSIQAAVSVDPFYEMLAARKKRISVKKKQEQP.

Residues 10 to 63 (DLTPEERMELENIRRRKQELLVEIQRLREELSEAMSEVEGLEANEGSKTLQRNR) are a coiled coil. The 130-residue stretch at 72-201 (FNMDPKKGIQ…VIMLNTSLHN (130 aa)) folds into the SEC7 domain. The PH domain occupies 259–376 (NPDREGWLLK…WIKSIQAAVS (118 aa)). Residues 268–276 (KLGGGRVKT), arginine 280, tyrosine 291, arginine 301, lysine 339, asparagine 350, and histidine 351 each bind a 1,2-diacyl-sn-glycero-3-phospho-(1D-myo-inositol-3,4,5-trisphosphate). Positions 387-395 (RKKRISVKK) are C-terminal autoinhibitory region.

As to quaternary structure, heteromer. Composed of TAMALIN, CYTH2 and at least one GRM1. Interacts with ARRB1. Interacts with ARL4D; the interaction is direct. Directly interacts with CCDC120 through the coiled coil domain; this interaction stabilizes CCDC120, possibly by preventing its ubiquitination, and is required for neurite growth in neuroblastoma cells. Interacts with ARF1. Interacts with FRMD4A. Interacts (via N-terminal domain) with INAVA (via N-terminal domain). In terms of tissue distribution, widely expressed.

It localises to the cell membrane. It is found in the cytoplasm. The protein localises to the cell projection. Its subcellular location is the growth cone. The protein resides in the cell junction. It localises to the tight junction. It is found in the adherens junction. In terms of biological role, acts as a guanine-nucleotide exchange factor (GEF). Promotes guanine-nucleotide exchange on ARF1, ARF3 and ARF6. Activates ARF factors through replacement of GDP with GTP. The cell membrane form, in association with ARL4 proteins, recruits ARF6 to the plasma membrane. Involved in neurite growth. The chain is Cytohesin-2 from Homo sapiens (Human).